Consider the following 377-residue polypeptide: 6-oxocyclohex-1-ene-1-carbonyl-CoA hydrolase (377 aa).

This sequence belongs to the enoyl-CoA hydratase/isomerase family. In terms of assembly, homotetramer.

It carries out the reaction 6-oxocyclohex-1-ene-1-carbonyl-CoA + 2 H2O = 3-hydroxy-6-carboxyhexanoyl-CoA + H(+). Its pathway is aromatic compound metabolism; benzoyl-CoA degradation. Its function is as follows. Involved in the central benzoyl-CoA catabolism. Catalyzes the addition of one molecule of water to the double bond and the hydrolytic cleavage of C-C bond in the alicyclic ring, 6-oxocyclohex-1-ene-1-carbonyl-CoA (6-OCH-CoA) to yield 3-hydroxypimelyl-CoA. This Thauera aromatica protein is 6-oxocyclohex-1-ene-1-carbonyl-CoA hydrolase (oah).